The primary structure comprises 102 residues: Large ribosomal subunit protein uL24 (102 aa).

The protein belongs to the universal ribosomal protein uL24 family. Part of the 50S ribosomal subunit.

In terms of biological role, one of two assembly initiator proteins, it binds directly to the 5'-end of the 23S rRNA, where it nucleates assembly of the 50S subunit. Its function is as follows. One of the proteins that surrounds the polypeptide exit tunnel on the outside of the subunit. This Limosilactobacillus fermentum (strain NBRC 3956 / LMG 18251) (Lactobacillus fermentum) protein is Large ribosomal subunit protein uL24.